A 1125-amino-acid polypeptide reads, in one-letter code: tRNA (34-2'-O)-methyltransferase regulator WDR6 (1125 aa).

Met-1 carries the post-translational modification N-acetylmethionine. 17 WD repeats span residues 89–130, 155–197, 207–246, 256–294, 295–335, 346–384, 433–475, 489–528, 567–605, 611–650, 652–692, 725–765, 767–798, 860–905, 912–958, 982–1024, and 1047–1085; these read SKGL…GNVA, TDRC…PDNK, GHVG…VPGG, GHSA…QAFR, GHQG…YPGL, SRPG…WEQL, LFQG…TGKA, SKQR…FKKP, HGKQ…QPVL, RGMN…KLHI, NCGG…IRPN, EHPD…GAAH, LTAV…HPGL, TRYM…RILH, HHKR…DRGS, AHSC…PELE, and AHAA…PTFM.

This sequence belongs to the WD repeat WDR6 family. As to quaternary structure, interacts with FTSJ1; the interaction is direct, and required for 2'-O-methylation of position 34 in substrate tRNAs. Interacts with IRS4. Interacts with STK11/LKB1. As to expression, expressed in hypothalamus, hippocampus, cerebrum cortex and cerebellum.

The protein resides in the cytoplasm. Functionally, together with methyltransferase FTSJ1, methylates the 2'-O-ribose of nucleotides at position 34 of the tRNA anticodon loop of substrate tRNAs. Required for the correct positioning of the substrate tRNA for methylation. Required to suppress amino acid starvation-induced autophagy. Enhances the STK11/LKB1-induced cell growth suppression activity. The polypeptide is tRNA (34-2'-O)-methyltransferase regulator WDR6 (Wdr6) (Rattus norvegicus (Rat)).